Consider the following 631-residue polypeptide: Dolichyl-diphosphooligosaccharide--protein glycosyltransferase subunit 2 (631 aa).

The signal sequence occupies residues 1–22; the sequence is MASPGASTVFLLALTILAGTQA. The Lumenal portion of the chain corresponds to 23-540; sequence LTPTHYLTKP…REPEKRPPTV (518 aa). N-linked (GlcNAc...) asparagine glycosylation occurs at Asn106. A Glycyl lysine isopeptide (Lys-Gly) (interchain with G-Cter in ubiquitin) cross-link involves residue Lys154. Residues 541 to 561 form a helical membrane-spanning segment; the sequence is VSNTFTALILSPLLLLFALWI. Topologically, residues 562 to 571 are cytoplasmic; sequence RIGANVSNFT. Residues 572–592 form a helical membrane-spanning segment; that stretch reads FAPSTIIFHLGHAAMLGLMYV. Residues 593 to 596 lie on the Lumenal side of the membrane; the sequence is YWTQ. The helical transmembrane segment at 597-617 threads the bilayer; it reads LNMFQTLKYLAILGSVTFLAG. Topologically, residues 618 to 631 are cytoplasmic; the sequence is NRMLAQQAIKRTAH.

It belongs to the SWP1 family. As to quaternary structure, component of the oligosaccharyltransferase (OST) complex. OST exists in two different complex forms which contain common core subunits RPN1, RPN2, OST48, OST4, DAD1 and TMEM258, either STT3A or STT3B as catalytic subunits, and form-specific accessory subunits. STT3A complex assembly occurs through the formation of 3 subcomplexes. Subcomplex 1 contains RPN1 and TMEM258, subcomplex 2 contains the STT3A-specific subunits STT3A, DC2/OSTC, and KCP2 as well as the core subunit OST4, and subcomplex 3 contains RPN2, DAD1, and OST48. The STT3A complex can form stable complexes with the Sec61 complex or with both the Sec61 and TRAP complexes. Interacts with DDI2. Interacts with TMEM35A/NACHO.

The protein resides in the endoplasmic reticulum. The protein localises to the endoplasmic reticulum membrane. The protein operates within protein modification; protein glycosylation. In terms of biological role, subunit of the oligosaccharyl transferase (OST) complex that catalyzes the initial transfer of a defined glycan (Glc(3)Man(9)GlcNAc(2) in eukaryotes) from the lipid carrier dolichol-pyrophosphate to an asparagine residue within an Asn-X-Ser/Thr consensus motif in nascent polypeptide chains, the first step in protein N-glycosylation. N-glycosylation occurs cotranslationally and the complex associates with the Sec61 complex at the channel-forming translocon complex that mediates protein translocation across the endoplasmic reticulum (ER). All subunits are required for a maximal enzyme activity. This is Dolichyl-diphosphooligosaccharide--protein glycosyltransferase subunit 2 from Canis lupus familiaris (Dog).